Here is a 187-residue protein sequence, read N- to C-terminus: Interferon alpha-3 (187 aa).

A signal peptide spans 1-23; the sequence is MALPCSFSVALVLLSCHSLCCLA. 2 cysteine pairs are disulfide-bonded: Cys-24–Cys-122 and Cys-52–Cys-160. N-linked (GlcNAc...) asparagine glycosylation is found at Asn-94 and Asn-101.

It belongs to the alpha/beta interferon family.

The protein resides in the secreted. Its function is as follows. Produced by macrophages, IFN-alpha have antiviral activities. Interferon stimulates the production of two enzymes: a protein kinase and an oligoadenylate synthetase. In Canis lupus familiaris (Dog), this protein is Interferon alpha-3.